We begin with the raw amino-acid sequence, 273 residues long: Large ribosomal subunit protein uL2 (273 aa).

2 disordered regions span residues Lys-28–His-53 and Arg-221–Lys-273. Low complexity predominate over residues Lys-39–Arg-48.

It belongs to the universal ribosomal protein uL2 family. In terms of assembly, part of the 50S ribosomal subunit. Forms a bridge to the 30S subunit in the 70S ribosome.

One of the primary rRNA binding proteins. Required for association of the 30S and 50S subunits to form the 70S ribosome, for tRNA binding and peptide bond formation. It has been suggested to have peptidyltransferase activity; this is somewhat controversial. Makes several contacts with the 16S rRNA in the 70S ribosome. This Salmonella agona (strain SL483) protein is Large ribosomal subunit protein uL2.